A 215-amino-acid chain; its full sequence is Pyrrolidone-carboxylate peptidase (215 aa).

Residues E80, C143, and H167 contribute to the active site.

This sequence belongs to the peptidase C15 family. In terms of assembly, homotetramer.

It localises to the cytoplasm. It catalyses the reaction Release of an N-terminal pyroglutamyl group from a polypeptide, the second amino acid generally not being Pro.. Functionally, removes 5-oxoproline from various penultimate amino acid residues except L-proline. This is Pyrrolidone-carboxylate peptidase from Yersinia pseudotuberculosis serotype O:3 (strain YPIII).